The sequence spans 147 residues: Deoxyuridine 5'-triphosphate nucleotidohydrolase (147 aa).

Residue R24 participates in Mg(2+) binding. DUTP contacts are provided by residues 68 to 70 (PRS), 82 to 85 (GVID), Y88, G93, I95, and R111.

Belongs to the dUTPase family. Mg(2+) is required as a cofactor.

The enzyme catalyses dUTP + H2O = dUMP + diphosphate + H(+). In terms of biological role, this enzyme is involved in nucleotide metabolism: it produces dUMP, the immediate precursor of thymidine nucleotides and it decreases the intracellular concentration of dUTP so that uracil cannot be incorporated into DNA. The polypeptide is Deoxyuridine 5'-triphosphate nucleotidohydrolase (OPG046) (Homo sapiens (Human)).